The primary structure comprises 118 residues: MTIAEITIRQKFSYPFLFGNVLGHPWPRNVPRKEIKMLLFRTANNSFPGFLLIFTRKRRNLPKQRDNEIPRTRALETYLRVFSAARKQREADATASFWRLVTSASRSHYHMWPIKRII.

This is an uncharacterized protein from Saccharomyces cerevisiae (strain ATCC 204508 / S288c) (Baker's yeast).